Here is a 412-residue protein sequence, read N- to C-terminus: Imidazolonepropionase (412 aa).

Fe(3+) contacts are provided by histidine 76 and histidine 78. Histidine 76 and histidine 78 together coordinate Zn(2+). 4-imidazolone-5-propanoate-binding residues include arginine 85, tyrosine 148, and histidine 181. Tyrosine 148 provides a ligand contact to N-formimidoyl-L-glutamate. Histidine 242 provides a ligand contact to Fe(3+). Histidine 242 contributes to the Zn(2+) binding site. Glutamate 245 provides a ligand contact to 4-imidazolone-5-propanoate. Residue aspartate 317 coordinates Fe(3+). Zn(2+) is bound at residue aspartate 317. The N-formimidoyl-L-glutamate site is built by asparagine 319 and glycine 321. Serine 322 is a binding site for 4-imidazolone-5-propanoate.

The protein belongs to the metallo-dependent hydrolases superfamily. HutI family. Zn(2+) is required as a cofactor. Fe(3+) serves as cofactor.

It is found in the cytoplasm. The enzyme catalyses 4-imidazolone-5-propanoate + H2O = N-formimidoyl-L-glutamate. Its pathway is amino-acid degradation; L-histidine degradation into L-glutamate; N-formimidoyl-L-glutamate from L-histidine: step 3/3. Its function is as follows. Catalyzes the hydrolytic cleavage of the carbon-nitrogen bond in imidazolone-5-propanoate to yield N-formimidoyl-L-glutamate. It is the third step in the universal histidine degradation pathway. The protein is Imidazolonepropionase of Staphylococcus aureus (strain Mu50 / ATCC 700699).